The primary structure comprises 103 residues: MSIAMTAPTTGVAPMTCETRLPAVPCHVGDPDLWFAENPGDLERAKALCAGCPIRVQCLTAALERQEPWGVWGGEILDRGSIVARKRPRGRPRKDSGGNPAAA.

The [4Fe-4S] cluster site is built by Cys17, Cys49, Cys52, and Cys58. Positions 25–82 constitute a 4Fe-4S Wbl-type domain; it reads PCHVGDPDLWFAENPGDLERAKALCAGCPIRVQCLTAALERQEPWGVWGGEILDRGSI. The tract at residues 82-103 is disordered; it reads IVARKRPRGRPRKDSGGNPAAA.

Belongs to the WhiB family. Requires [4Fe-4S] cluster as cofactor. Post-translationally, the Fe-S cluster can be nitrosylated by nitric oxide (NO). In terms of processing, upon Fe-S cluster removal intramolecular disulfide bonds are formed.

It is found in the cytoplasm. Its function is as follows. Acts as a transcriptional regulator. Probably redox-responsive. The apo- but not holo-form probably binds DNA. Participates in maintaining a reduced cytoplasmic (MSH/MSSM) environment under normal growth conditions and directly or indirectly controls the concentration of mycothiol (MSH + MSSM). This Mycolicibacterium smegmatis (strain ATCC 700084 / mc(2)155) (Mycobacterium smegmatis) protein is Transcriptional regulator WhiB7 (whiB7).